We begin with the raw amino-acid sequence, 345 residues long: S-adenosylmethionine:tRNA ribosyltransferase-isomerase (345 aa).

Belongs to the QueA family. As to quaternary structure, monomer.

The protein resides in the cytoplasm. It carries out the reaction 7-aminomethyl-7-carbaguanosine(34) in tRNA + S-adenosyl-L-methionine = epoxyqueuosine(34) in tRNA + adenine + L-methionine + 2 H(+). The protein operates within tRNA modification; tRNA-queuosine biosynthesis. Its function is as follows. Transfers and isomerizes the ribose moiety from AdoMet to the 7-aminomethyl group of 7-deazaguanine (preQ1-tRNA) to give epoxyqueuosine (oQ-tRNA). This is S-adenosylmethionine:tRNA ribosyltransferase-isomerase from Alkalilimnicola ehrlichii (strain ATCC BAA-1101 / DSM 17681 / MLHE-1).